Consider the following 283-residue polypeptide: ATP synthase gamma chain (283 aa).

This sequence belongs to the ATPase gamma chain family. F-type ATPases have 2 components, CF(1) - the catalytic core - and CF(0) - the membrane proton channel. CF(1) has five subunits: alpha(3), beta(3), gamma(1), delta(1), epsilon(1). CF(0) has three main subunits: a, b and c.

Its subcellular location is the cell inner membrane. In terms of biological role, produces ATP from ADP in the presence of a proton gradient across the membrane. The gamma chain is believed to be important in regulating ATPase activity and the flow of protons through the CF(0) complex. This chain is ATP synthase gamma chain, found in Ehrlichia ruminantium (strain Gardel).